The primary structure comprises 286 residues: Cytosolic 5'-nucleotidase 3 (286 aa).

Asp38 functions as the Nucleophile in the catalytic mechanism. The Mg(2+) site is built by Asp38 and Asp40. The Proton donor role is filled by Asp40. Substrate is bound by residues Glu85, Ser106, 153–154 (SA), and Lys202. Residue Asp227 coordinates Mg(2+).

The protein belongs to the pyrimidine 5'-nucleotidase family.

It is found in the cytoplasm. The catalysed reaction is a ribonucleoside 5'-phosphate + H2O = a ribonucleoside + phosphate. In terms of biological role, can act both as nucleotidase and as phosphotransferase. This chain is Cytosolic 5'-nucleotidase 3 (nt5c3), found in Danio rerio (Zebrafish).